Reading from the N-terminus, the 257-residue chain is Ditrans,polycis-undecaprenyl-diphosphate synthase ((2E,6E)-farnesyl-diphosphate specific) (257 aa).

D34 is an active-site residue. Position 34 (D34) interacts with Mg(2+). Residues 35–38 (GNGR), W39, R47, and H51 contribute to the substrate site. N82 (proton acceptor) is an active-site residue. Substrate contacts are provided by residues W83, R85, R201, and 207–209 (RLS). Residue E220 coordinates Mg(2+).

It belongs to the UPP synthase family. In terms of assembly, homodimer. It depends on Mg(2+) as a cofactor.

The enzyme catalyses 8 isopentenyl diphosphate + (2E,6E)-farnesyl diphosphate = di-trans,octa-cis-undecaprenyl diphosphate + 8 diphosphate. Catalyzes the sequential condensation of isopentenyl diphosphate (IPP) with (2E,6E)-farnesyl diphosphate (E,E-FPP) to yield (2Z,6Z,10Z,14Z,18Z,22Z,26Z,30Z,34E,38E)-undecaprenyl diphosphate (di-trans,octa-cis-UPP). UPP is the precursor of glycosyl carrier lipid in the biosynthesis of bacterial cell wall polysaccharide components such as peptidoglycan and lipopolysaccharide. The sequence is that of Ditrans,polycis-undecaprenyl-diphosphate synthase ((2E,6E)-farnesyl-diphosphate specific) from Francisella tularensis subsp. tularensis (strain SCHU S4 / Schu 4).